The chain runs to 289 residues: 26S proteasome non-ATPase regulatory subunit 8 (289 aa).

Ser-45 is modified (phosphoserine). In terms of domain architecture, PCI spans 101–270; that stretch reads PSFERYMAQL…QQKPEDTTIP (170 aa). Lys-236 is covalently cross-linked (Glycyl lysine isopeptide (Lys-Gly) (interchain with G-Cter in SUMO2)).

The protein belongs to the proteasome subunit S14 family. As to quaternary structure, component of the 19S proteasome regulatory particle complex. The 26S proteasome consists of a 20S core particle (CP) and two 19S regulatory subunits (RP). The regulatory particle is made of a lid composed of 9 subunits including PSMD8, a base containing 6 ATPases and few additional components. Interacts with DDI2. Interacts with TASOR.

In terms of biological role, component of the 26S proteasome, a multiprotein complex involved in the ATP-dependent degradation of ubiquitinated proteins. This complex plays a key role in the maintenance of protein homeostasis by removing misfolded or damaged proteins, which could impair cellular functions, and by removing proteins whose functions are no longer required. Therefore, the proteasome participates in numerous cellular processes, including cell cycle progression, apoptosis, or DNA damage repair. The protein is 26S proteasome non-ATPase regulatory subunit 8 (PSMD8) of Pongo abelii (Sumatran orangutan).